The primary structure comprises 247 residues: ABC-type transporter ATP-binding protein EcsA (247 aa).

One can recognise an ABC transporter domain in the interval 4-234 (LSVKDLTGGY…FGMKDAALDD (231 aa)). 36–43 (GLNGAGKS) provides a ligand contact to ATP.

It belongs to the ABC transporter superfamily.

Functionally, has a role in exoprotein production, sporulation and competence. In Bacillus subtilis (strain 168), this protein is ABC-type transporter ATP-binding protein EcsA (ecsA).